A 504-amino-acid polypeptide reads, in one-letter code: Acetyltransferase pyiB (504 aa).

A signal peptide spans 1–18 (MGFLSAGGLWASLFRARI). N-linked (GlcNAc...) asparagine glycosylation occurs at N84. H181 functions as the Proton acceptor in the catalytic mechanism. N413 and N467 each carry an N-linked (GlcNAc...) asparagine glycan.

Belongs to the plant acyltransferase family.

It functions in the pathway mycotoxin biosynthesis. In terms of biological role, acetyltransferase; part of the gene cluster that mediates the biosynthesis of the mycotoxin pyrichalasin H, a tyrosine-derived cytochalasan that inhibits the growth of rice seedlings, but also inhibits lymphocyte capping and actin polymerization and alters cell morphology. Pyrichalasin H is indicated as the responsible agent for the genus-specific pathogenicity of M.grisea toward crabgrass. The first step in the pathway is catalyzed by the O-methyltransferase pyiA which methylates free tyrosine to generate the precursor O-methyltyrosine. The hybrid PKS-NRPS pyiS, assisted by the enoyl reductase pyiC, are responsible for fusion of the O-methyltyrosine precursor and the polyketide backbone. The polyketide synthase module (PKS) of pyiS is responsible for the synthesis of the polyketide backbone and the downstream nonribosomal peptide synthetase (NRPS) amidates the carboxyl end of the polyketide with the O-methyltyrosine precursor. As the NRPS A-domain demonstrates substrate tolerance, pyiS can also use phenylalanine, tyrosine and even para-chlorophenylalanine as amino acid precursor, which leads to the production of novel cytochalasans, including halogenated cytochalasans. Because pyiS lacks a designated enoylreductase (ER) domain, the required activity is provided the enoyl reductase pyiC. Reduction by the hydrolyase pyiE leads to 1,5-dihydropyrrolone, which is substrate for dehydration and intra-molecular Diels-Alder cyclization by the Diels-Alderase pyiF to yield the required isoindolone-fused macrocycle. The tailoring cytochrome P450 monooxygenases piyD and piyG catalyze the hydroxylation at C-18 and C-7, respectivily, whereas the short-chain dehydrogenase/reductase pyiH reduces the carbonyl at C-21 in preparation for the transfer of an acetyl group by the acetyltransferase pyiB. These 3 reactions whose order is not clear yet, lead to the production of O-methylpyrichalasin J, a deacetylated pyrichalasin H. Finally, pyiB to converts O-methylpyrichalasin J into the final product pyrichalasin H via acetylation of C-21. This is Acetyltransferase pyiB from Pyricularia grisea (Crabgrass-specific blast fungus).